The following is a 351-amino-acid chain: MGRVGVVSWGAYIPKYRIRTEEVARIWGDDPLRIVDLYLVDEKSVEGIDEDAVTIAVEAARRALRRATLDPRRIGAVYVGTESKPYAVKPISSILIDALGLSNNVFAVDMEFACKAGSEGLMAAVGLVESGKVEYGMTVGADTSQGEPGEHLEYSASSGGVALVVGREGVAAELEAAYAYASDTPDFWRREGSPYPMHGEGFTGEPAYFRHVINAARGLMAAYGYKPSDFAYAVFHQPNGRFPVRAASTLNIPMEKVKPGIVVTHIGNTYNASALMGFAKVLDQAKPGDKILVVTFGSGAGSNAYVFSATDLIKERQNAAVPTVEAMLRDKIYVDYAQYLKMRKMIKLFEY.

Position 30 (D30) interacts with (3S)-3-hydroxy-3-methylglutaryl-CoA. E82 functions as the Proton donor/acceptor in the catalytic mechanism. Positions 114, 155, 203, and 236 each coordinate (3S)-3-hydroxy-3-methylglutaryl-CoA. C114 functions as the Acyl-thioester intermediate in the catalytic mechanism. The active-site Proton donor/acceptor is the H236. Residue R241 coordinates CoA. Residues R245, N268, and S298 each contribute to the (3S)-3-hydroxy-3-methylglutaryl-CoA site.

The protein belongs to the thiolase-like superfamily. Archaeal HMG-CoA synthase family. In terms of assembly, interacts with acetoacetyl-CoA thiolase that catalyzes the precedent step in the pathway and with a DUF35 protein. The acetoacetyl-CoA thiolase/HMG-CoA synthase complex channels the intermediate via a fused CoA-binding site, which allows for efficient coupling of the endergonic thiolase reaction with the exergonic HMGCS reaction.

The catalysed reaction is acetoacetyl-CoA + acetyl-CoA + H2O = (3S)-3-hydroxy-3-methylglutaryl-CoA + CoA + H(+). It functions in the pathway metabolic intermediate biosynthesis; (R)-mevalonate biosynthesis; (R)-mevalonate from acetyl-CoA: step 2/3. Functionally, catalyzes the condensation of acetyl-CoA with acetoacetyl-CoA to form 3-hydroxy-3-methylglutaryl-CoA (HMG-CoA). Functions in the mevalonate (MVA) pathway leading to isopentenyl diphosphate (IPP), a key precursor for the biosynthesis of isoprenoid compounds that are building blocks of archaeal membrane lipids. In Pyrobaculum neutrophilum (strain DSM 2338 / JCM 9278 / NBRC 100436 / V24Sta) (Thermoproteus neutrophilus), this protein is Hydroxymethylglutaryl-CoA synthase.